Consider the following 1172-residue polypeptide: Laminin subunit beta-3 (1172 aa).

Residues 1 to 17 (MRPFFLLCFALPGLLHA) form the signal peptide. The region spanning 22–249 (SRGACYPPVG…AVSQLRLQGS (228 aa)) is the Laminin N-terminal domain. N-linked (GlcNAc...) asparagine glycosylation occurs at asparagine 220. Intrachain disulfides connect cysteine 250–cysteine 259, cysteine 252–cysteine 279, cysteine 281–cysteine 290, cysteine 293–cysteine 313, cysteine 316–cysteine 325, cysteine 318–cysteine 343, cysteine 346–cysteine 355, cysteine 358–cysteine 376, cysteine 379–cysteine 392, cysteine 381–cysteine 399, cysteine 401–cysteine 410, cysteine 413–cysteine 428, cysteine 431–cysteine 444, cysteine 433–cysteine 451, cysteine 453–cysteine 462, cysteine 465–cysteine 478, cysteine 481–cysteine 493, cysteine 483–cysteine 500, cysteine 502–cysteine 511, cysteine 519–cysteine 531, cysteine 534–cysteine 546, cysteine 536–cysteine 553, cysteine 555–cysteine 564, and cysteine 567–cysteine 578. Laminin EGF-like domains lie at 250–315 (CFCH…ECQR), 316–378 (CDCN…TCIS), 379–430 (CECD…GCHR), 431–480 (CDCN…GCEP), 481–533 (CACD…GCRA), and 534–580 (CDCD…VCVA). Residues 579–785 (VACHPCFQTY…SLPDLTPTFN (207 aa)) form a domain II region. Asparagine 604 carries an N-linked (GlcNAc...) asparagine glycan. Residues 723–757 (EQSAQAAQQVSDSSRLLDQLRDSRREAERLVRQAG) are a coiled coil. The segment at 786 to 816 (KLCGNSRQMACTPISCPGELCPQDNGTACGS) is domain alpha. The N-linked (GlcNAc...) asparagine glycan is linked to asparagine 810. Residues 817-1170 (RCRGVLPRAG…INGRVLYYAT (354 aa)) form a domain I region. Coiled coils occupy residues 831–884 (MAGQ…MEED) and 948–1133 (VLSQ…ELEL).

As to quaternary structure, laminin is a complex glycoprotein, consisting of three different polypeptide chains (alpha, beta, gamma), which are bound to each other by disulfide bonds into a cross-shaped molecule comprising one long and three short arms with globules at each end. Beta-3 is a subunit of laminin-5 (laminin-332 or epiligrin/kalinin/nicein). Interacts with ECM1. In terms of tissue distribution, found in the basement membranes (major component).

It localises to the secreted. It is found in the extracellular space. The protein localises to the extracellular matrix. Its subcellular location is the basement membrane. Its function is as follows. Binding to cells via a high affinity receptor, laminin is thought to mediate the attachment, migration and organization of cells into tissues during embryonic development by interacting with other extracellular matrix components. This Homo sapiens (Human) protein is Laminin subunit beta-3 (LAMB3).